The following is a 412-amino-acid chain: Serine hydroxymethyltransferase (412 aa).

Residues L117 and 121–123 (GHL) each bind (6S)-5,6,7,8-tetrahydrofolate. At K226 the chain carries N6-(pyridoxal phosphate)lysine.

Belongs to the SHMT family. As to quaternary structure, homodimer. Requires pyridoxal 5'-phosphate as cofactor.

The protein localises to the cytoplasm. It catalyses the reaction (6R)-5,10-methylene-5,6,7,8-tetrahydrofolate + glycine + H2O = (6S)-5,6,7,8-tetrahydrofolate + L-serine. Its pathway is one-carbon metabolism; tetrahydrofolate interconversion. It participates in amino-acid biosynthesis; glycine biosynthesis; glycine from L-serine: step 1/1. Functionally, catalyzes the reversible interconversion of serine and glycine with tetrahydrofolate (THF) serving as the one-carbon carrier. This reaction serves as the major source of one-carbon groups required for the biosynthesis of purines, thymidylate, methionine, and other important biomolecules. Also exhibits THF-independent aldolase activity toward beta-hydroxyamino acids, producing glycine and aldehydes, via a retro-aldol mechanism. In Staphylococcus epidermidis (strain ATCC 35984 / DSM 28319 / BCRC 17069 / CCUG 31568 / BM 3577 / RP62A), this protein is Serine hydroxymethyltransferase.